Reading from the N-terminus, the 89-residue chain is Small cysteine-rich protein 1 (89 aa).

The N-terminal stretch at 1–20 (MDVRFRLCLFLVILVIVANA) is a signal peptide. A propeptide spanning residues 21-27 (NVIKEPE) is cleaved from the precursor.

This sequence belongs to the Cnidaria small cysteine-rich protein (SCRiP) family. gamma subfamily. Post-translationally, contains 4 disulfide bonds.

The protein resides in the secreted. It is found in the nematocyst. In terms of biological role, induces neurotoxic symptoms on zebrafish. Has also been claimed to be implied in calcification, but tests on homolog proteins suggest that proteins of this family have a neurotoxic function and not a calcification function. The sequence is that of Small cysteine-rich protein 1 from Acropora millepora (Staghorn coral).